Here is a 102-residue protein sequence, read N- to C-terminus: Large ribosomal subunit protein bL21 (102 aa).

Positions 80–91 are enriched in basic residues; it reads KNSKRKKGHRQP. The disordered stretch occupies residues 80 to 102; that stretch reads KNSKRKKGHRQPYTKLTIDKINA.

This sequence belongs to the bacterial ribosomal protein bL21 family. In terms of assembly, part of the 50S ribosomal subunit. Contacts protein L20.

Functionally, this protein binds to 23S rRNA in the presence of protein L20. The protein is Large ribosomal subunit protein bL21 of Staphylococcus aureus (strain Mu3 / ATCC 700698).